We begin with the raw amino-acid sequence, 109 residues long: Ubiquitin-related modifier 1 homolog (109 aa).

G109 carries the 1-thioglycine modification. A Glycyl lysine isopeptide (Gly-Lys) (interchain with K-? in acceptor proteins) cross-link involves residue G109.

Belongs to the URM1 family. Post-translationally, C-terminal thiocarboxylation occurs in 2 steps, it is first acyl-adenylated (-COAMP) via the hesA/moeB/thiF part of the MOCS3 homolog, then thiocarboxylated (-COSH) via the rhodanese domain of the MOCS3 homolog.

The protein resides in the cytoplasm. It participates in tRNA modification; 5-methoxycarbonylmethyl-2-thiouridine-tRNA biosynthesis. Functionally, acts as a sulfur carrier required for 2-thiolation of mcm(5)S(2)U at tRNA wobble positions of cytosolic tRNA(Lys), tRNA(Glu) and tRNA(Gln). Serves as sulfur donor in tRNA 2-thiolation reaction by being thiocarboxylated (-COSH) at its C-terminus by MOCS3. The sulfur is then transferred to tRNA to form 2-thiolation of mcm(5)S(2)U. Also acts as a ubiquitin-like protein (UBL) that is covalently conjugated via an isopeptide bond to lysine residues of target proteins. The thiocarboxylated form serves as substrate for conjugation and oxidative stress specifically induces the formation of UBL-protein conjugates. In Anopheles gambiae (African malaria mosquito), this protein is Ubiquitin-related modifier 1 homolog.